Here is a 429-residue protein sequence, read N- to C-terminus: Enolase (429 aa).

Residue Gln-163 participates in (2R)-2-phosphoglycerate binding. Glu-205 (proton donor) is an active-site residue. Positions 242, 286, and 313 each coordinate Mg(2+). (2R)-2-phosphoglycerate-binding residues include Lys-338, Arg-367, Ser-368, and Lys-389. Lys-338 acts as the Proton acceptor in catalysis.

It belongs to the enolase family. It depends on Mg(2+) as a cofactor.

It is found in the cytoplasm. It localises to the secreted. The protein resides in the cell surface. It carries out the reaction (2R)-2-phosphoglycerate = phosphoenolpyruvate + H2O. Its pathway is carbohydrate degradation; glycolysis; pyruvate from D-glyceraldehyde 3-phosphate: step 4/5. Functionally, catalyzes the reversible conversion of 2-phosphoglycerate (2-PG) into phosphoenolpyruvate (PEP). It is essential for the degradation of carbohydrates via glycolysis. This Pelobacter propionicus (strain DSM 2379 / NBRC 103807 / OttBd1) protein is Enolase.